The sequence spans 390 residues: S-adenosylmethionine synthase 2 (390 aa).

Glutamate 9 lines the Mg(2+) pocket. ATP is bound at residue histidine 15. A K(+)-binding site is contributed by glutamate 43. L-methionine is bound by residues glutamate 56 and glutamine 99. ATP is bound by residues 167 to 169 (DGK), 235 to 238 (SGRF), aspartate 246, 252 to 253 (RK), alanine 269, lysine 273, and lysine 277. An L-methionine-binding site is contributed by aspartate 246. Lysine 277 is a binding site for L-methionine.

Belongs to the AdoMet synthase family. Homotetramer. Requires Mn(2+) as cofactor. Mg(2+) is required as a cofactor. The cofactor is Co(2+). K(+) serves as cofactor.

The protein resides in the cytoplasm. The enzyme catalyses L-methionine + ATP + H2O = S-adenosyl-L-methionine + phosphate + diphosphate. The protein operates within amino-acid biosynthesis; S-adenosyl-L-methionine biosynthesis; S-adenosyl-L-methionine from L-methionine: step 1/1. Catalyzes the formation of S-adenosylmethionine from methionine and ATP. The reaction comprises two steps that are both catalyzed by the same enzyme: formation of S-adenosylmethionine (AdoMet) and triphosphate, and subsequent hydrolysis of the triphosphate. The polypeptide is S-adenosylmethionine synthase 2 (SAMS2) (Nicotiana tabacum (Common tobacco)).